The following is a 118-amino-acid chain: Small ribosomal subunit protein bS6 (118 aa).

This sequence belongs to the bacterial ribosomal protein bS6 family.

In terms of biological role, binds together with bS18 to 16S ribosomal RNA. The polypeptide is Small ribosomal subunit protein bS6 (Saccharopolyspora erythraea (strain ATCC 11635 / DSM 40517 / JCM 4748 / NBRC 13426 / NCIMB 8594 / NRRL 2338)).